Here is a 297-residue protein sequence, read N- to C-terminus: Homoserine kinase (297 aa).

Residue 82-92 (PLTRGLGSSAS) coordinates ATP.

The protein belongs to the GHMP kinase family. Homoserine kinase subfamily.

It localises to the cytoplasm. The enzyme catalyses L-homoserine + ATP = O-phospho-L-homoserine + ADP + H(+). It participates in amino-acid biosynthesis; L-threonine biosynthesis; L-threonine from L-aspartate: step 4/5. Functionally, catalyzes the ATP-dependent phosphorylation of L-homoserine to L-homoserine phosphate. The chain is Homoserine kinase from Bacillus cereus (strain B4264).